A 238-amino-acid chain; its full sequence is Dof zinc finger protein MNB1A (238 aa).

Low complexity predominate over residues 1–13; sequence MQEASSAAAAGAE. The tract at residues 1–48 is disordered; it reads MQEASSAAAAGAEPGRRAAQHQFAGVDLRRPKGYAAPAPAPAVGEGDP. Residues 47-101 form a Dof-type zinc finger; sequence DPCPRCASRDTKFCYYNNYNTSQPRHFCKGCRRYWTKGGTLRNVPVGGGTRKKPS. Zn(2+) contacts are provided by Cys49, Cys52, Cys74, and Cys77. The segment at 85–155 is disordered; that stretch reads GTLRNVPVGG…TATTTTTTSE (71 aa). Residues 119-130 are compositionally biased toward basic residues; it reads PKKKPASKKRRV. Over residues 138-155 the composition is skewed to low complexity; that stretch reads ATAADPGKTATTTTTTSE.

Expressed in all tissues examined.

The protein localises to the nucleus. Its function is as follows. Transcription factor that binds specifically to a 5'-AA[AG]G-3' consensus core sequence at the MNF1-binding site. This chain is Dof zinc finger protein MNB1A (MNB1A), found in Zea mays (Maize).